We begin with the raw amino-acid sequence, 410 residues long: Adenosylhomocysteinase (410 aa).

Residues aspartate 117 and glutamate 142 each contribute to the substrate site. 143 to 145 is a binding site for NAD(+); sequence TTT. Residues lysine 172 and aspartate 176 each coordinate substrate. NAD(+) is bound by residues asparagine 177, 206-211, glutamate 229, 285-287, and asparagine 332; these read GYGYCG and AGH.

This sequence belongs to the adenosylhomocysteinase family. It depends on NAD(+) as a cofactor.

The protein localises to the cytoplasm. It carries out the reaction S-adenosyl-L-homocysteine + H2O = L-homocysteine + adenosine. It participates in amino-acid biosynthesis; L-homocysteine biosynthesis; L-homocysteine from S-adenosyl-L-homocysteine: step 1/1. May play a key role in the regulation of the intracellular concentration of adenosylhomocysteine. The polypeptide is Adenosylhomocysteinase (Thermoplasma acidophilum (strain ATCC 25905 / DSM 1728 / JCM 9062 / NBRC 15155 / AMRC-C165)).